A 739-amino-acid chain; its full sequence is MSSRHRLDLDGSGRGDRRRSPNRRSRSRSRSPHRRSSPDRKRQIGAVGNMKIQINPYNNQPFSNRYWAIWEKRSQLPVWEYKEKFMELLRNNQCITLVGETGSGKTTQIPQWAVEFMKQQQQGQPPGQARLVACTQPRRVAAMSVATRVAEEMDVVLGQEVGYSIRFEDCISERTVLKYCTDGMLLREAMNSPLLDKYKVLILDEAHERTLATDILMGLIKEIVRNRADIKVVIMSATLDAGKFQRYFEDCPLLSVPGRTFPVEIFFTPNAEKDYLEAAIRTVIQIHMVEEVEGDILLFLTGQEEIEEACKRIDREIQALGADAGALSCIPLYSTLPPAAQQRIFEPAPPNRPNGAISRKCVISTNIAETSLTIDGVVFVIDPGFSKQKVYNPRIRVESLLVCPISKASAMQRAGRAGRTKPGKCFRLYTETAYGSEMQDQTYPEILRSNLGSVVLQLKKLGTEDLVHFDFMDPPAPETLMRALELLNYLQAINDDGELTELGSLMAEFPLDPQLAKMLITSTELNCSNEILSITAMLSVPQCWVRPNEMRTEADEAKARFAHIDGDHLTLLNVYHSFKQNQEDPQWCYDNFINYRTMKTADTVRTQLSRVMDKYNLRRVSTDFKSRDYYLNIRKALVAGFFMQVAHLERSGHYVTVKDNQLVNLHPSTVLDHKPEWALYNEFVLTTKNFIRTVTDVRPEWLLQIAPQYYDLDNFPDGDTKRKLTTVMQTLQRNAGRGY.

Residues 1-19 are compositionally biased toward basic and acidic residues; sequence MSSRHRLDLDGSGRGDRRR. Residues 1-49 are disordered; sequence MSSRHRLDLDGSGRGDRRRSPNRRSRSRSRSPHRRSSPDRKRQIGAVGN. Residues 20-35 are compositionally biased toward basic residues; that stretch reads SPNRRSRSRSRSPHRR. One can recognise a Helicase ATP-binding domain in the interval 86–257; it reads MELLRNNQCI…FEDCPLLSVP (172 aa). 99-106 provides a ligand contact to ATP; that stretch reads GETGSGKT. The DEAH box motif lies at 204–207; the sequence is DEAH. The 181-residue stretch at 282–462 folds into the Helicase C-terminal domain; sequence TVIQIHMVEE…SVVLQLKKLG (181 aa).

It belongs to the DEAD box helicase family. DEAH subfamily. DDX15/PRP43 sub-subfamily.

It is found in the nucleus. The enzyme catalyses ATP + H2O = ADP + phosphate + H(+). Its function is as follows. Pre-mRNA processing factor involved in disassembly of spliceosomes after the release of mature mRNA. The protein is Pre-mRNA-splicing factor ATP-dependent RNA helicase ddx-15 of Caenorhabditis elegans.